The sequence spans 374 residues: Putative F-box/kelch-repeat protein At4g39756 (374 aa).

Residues cysteine 17–arginine 63 form the F-box domain. 4 Kelch repeats span residues glutamate 135–glycine 180, lysine 181–valine 227, lysine 231–cysteine 278, and tryptophan 280–valine 308.

The polypeptide is Putative F-box/kelch-repeat protein At4g39756 (Arabidopsis thaliana (Mouse-ear cress)).